The chain runs to 150 residues: AN1-type zinc finger protein TMC1 (150 aa).

Residues 1-82 are disordered; it reads MSDINEIEIP…TKKTTKKKKK (82 aa). Serine 2 bears the N-acetylserine mark. The segment covering 23–33 has biased composition (basic and acidic residues); sequence DPMHEIEDKST. Serine 43 and serine 54 each carry phosphoserine. Positions 53–70 are enriched in low complexity; that stretch reads NSRSSSNSSVTSTGQSSR. Residues 71–82 are compositionally biased toward basic residues; it reads RVTKKTTKKKKK. Residues 79-128 form an AN1-type zinc finger; that stretch reads KKKKNACYFDTCSSAASKFIGDCNFCKGHFCSKHRLMENHACNGLTSCKE. Cysteine 85, cysteine 90, cysteine 101, cysteine 104, cysteine 109, histidine 112, histidine 118, and cysteine 120 together coordinate Zn(2+).

The protein resides in the nucleus. In terms of biological role, may have a role in protecting cells from metalloid-induced proteotoxicity. In Saccharomyces cerevisiae (strain ATCC 204508 / S288c) (Baker's yeast), this protein is AN1-type zinc finger protein TMC1.